The following is a 153-amino-acid chain: Ribosome maturation factor RimP (153 aa).

It belongs to the RimP family.

It localises to the cytoplasm. In terms of biological role, required for maturation of 30S ribosomal subunits. The protein is Ribosome maturation factor RimP of Actinobacillus pleuropneumoniae serotype 5b (strain L20).